Consider the following 96-residue polypeptide: Large ribosomal subunit protein eL14 (96 aa).

The protein belongs to the eukaryotic ribosomal protein eL14 family.

This chain is Large ribosomal subunit protein eL14, found in Sulfolobus acidocaldarius (strain ATCC 33909 / DSM 639 / JCM 8929 / NBRC 15157 / NCIMB 11770).